Reading from the N-terminus, the 131-residue chain is Small ribosomal subunit protein uS8 (131 aa).

This sequence belongs to the universal ribosomal protein uS8 family. Part of the 30S ribosomal subunit. Contacts proteins S5 and S12.

One of the primary rRNA binding proteins, it binds directly to 16S rRNA central domain where it helps coordinate assembly of the platform of the 30S subunit. This Dehalococcoides mccartyi (strain CBDB1) protein is Small ribosomal subunit protein uS8.